The sequence spans 399 residues: Tryptophan synthase beta chain (399 aa).

The residue at position 92 (Lys92) is an N6-(pyridoxal phosphate)lysine.

This sequence belongs to the TrpB family. As to quaternary structure, tetramer of two alpha and two beta chains. The cofactor is pyridoxal 5'-phosphate.

The catalysed reaction is (1S,2R)-1-C-(indol-3-yl)glycerol 3-phosphate + L-serine = D-glyceraldehyde 3-phosphate + L-tryptophan + H2O. The protein operates within amino-acid biosynthesis; L-tryptophan biosynthesis; L-tryptophan from chorismate: step 5/5. Functionally, the beta subunit is responsible for the synthesis of L-tryptophan from indole and L-serine. The sequence is that of Tryptophan synthase beta chain from Oceanobacillus iheyensis (strain DSM 14371 / CIP 107618 / JCM 11309 / KCTC 3954 / HTE831).